Reading from the N-terminus, the 90-residue chain is AADCNGACSPFQMPPCGSTDCLCIPAGLLFVGYCTYPSGLSSVAKMIDEHPNLCQSDDECMKKGSGNFCARYPNNYMDYGWCFDSDSEAL.

Ala1 is a signal peptide. Disulfide bonds link Cys4/Cys21, Cys8/Cys23, and Cys16/Cys34. Residues 40–47 (LSSVAKMI) constitute a propeptide that is removed on maturation.

In terms of processing, the C-terminal glycine may be removed from A1b.

In terms of biological role, A1b binds to basic 7S globulin (BG) and stimulates its phosphorylation activity. This Phaseolus angularis (Azuki bean) protein is Albumin-1 (LEG).